Here is a 260-residue protein sequence, read N- to C-terminus: MKEGKHFVLVHGACHGGWSWYKLKPLLEAAGHKVTALDLAASGTDLRKIEELRTLYDYTLPLMELMESLSADEKVILVGHSLGGMNLGLAMEKYPQKIYAAVFLAAFMPDSVHNSSFVLEQYNERTPAENWLDTQFLPYGSPEEPLTSMFFGPKFLAHKLYQLCSPEDLALASSLVRPSSLFMEDLSKAKYFTDERFGSVKRVYIVCTEDKGIPEEFQRWQIDNIGVTEAIEIKGADHMAMLCEPQKLCASLLEIAHKYN.

Positions 13, 81, and 159 each coordinate salicylate. Ser81 serves as the catalytic Acyl-ester intermediate. Catalysis depends on charge relay system residues Asp210 and His238. Salicylate-binding residues include His238, Leu253, and His257.

This sequence belongs to the AB hydrolase superfamily. Methylesterase family.

The enzyme catalyses methyl salicylate + H2O = salicylate + methanol + H(+). The protein operates within plant hormone biosynthesis. Esterase activity is down-regulated by salicylic acid (SA) or by tetraFA, a synthetic SA analog. Functionally, required to convert methyl salicylate (MeSA) to salicylic acid (SA) as part of the signal transduction pathways that activate systemic acquired resistance in systemic tissue. MeSA is believed to be an inactive form that needs to be demethylated to exert a biological effect. Also able to catalyze the conversion of acibenzolar-S-methyl into acibenzolar to induce systemic acquired resistance. The protein is Salicylic acid-binding protein 2 of Nicotiana tabacum (Common tobacco).